We begin with the raw amino-acid sequence, 127 residues long: Glycine cleavage system H protein (127 aa).

The 82-residue stretch at 24-105 (TALVGITDFA…YGEGWMVKMK (82 aa)) folds into the Lipoyl-binding domain. Lys65 is modified (N6-lipoyllysine).

This sequence belongs to the GcvH family. As to quaternary structure, the glycine cleavage system is composed of four proteins: P, T, L and H. It depends on (R)-lipoate as a cofactor.

The glycine cleavage system catalyzes the degradation of glycine. The H protein shuttles the methylamine group of glycine from the P protein to the T protein. The protein is Glycine cleavage system H protein of Chlorobium phaeovibrioides (strain DSM 265 / 1930) (Prosthecochloris vibrioformis (strain DSM 265)).